The primary structure comprises 471 residues: Tigger transposable element-derived protein 3 (471 aa).

Residues 3 to 55 enclose the HTH psq-type domain; sequence LSSKKKLHALSLAEKIQVLELLDESKMSQSEVARRFQVSQPQISRICKNKEKL. 2 DNA-binding regions (H-T-H motif) span residues 31-51 and 100-130; these read QSEVARRFQVSQPQISRICKN and PMLLHKAKELADIMGQDFVPSIGWLVRWKRR. The region spanning 67–137 is the HTH CENPB-type domain; the sequence is ERKRKRESKY…KRRNNVGFGA (71 aa). The DDE-1 domain occupies 167 to 360; the sequence is FSPEDVFGCA…VPPQLIFSSF (194 aa).

It belongs to the tigger transposable element derived protein family.

Its subcellular location is the nucleus. This Homo sapiens (Human) protein is Tigger transposable element-derived protein 3 (TIGD3).